The sequence spans 350 residues: Phenylalanine--tRNA ligase alpha subunit (350 aa).

Position 271 (glutamate 271) interacts with Mg(2+).

This sequence belongs to the class-II aminoacyl-tRNA synthetase family. Phe-tRNA synthetase alpha subunit type 1 subfamily. As to quaternary structure, tetramer of two alpha and two beta subunits. The cofactor is Mg(2+).

It is found in the cytoplasm. The enzyme catalyses tRNA(Phe) + L-phenylalanine + ATP = L-phenylalanyl-tRNA(Phe) + AMP + diphosphate + H(+). The polypeptide is Phenylalanine--tRNA ligase alpha subunit (Verminephrobacter eiseniae (strain EF01-2)).